Consider the following 126-residue polypeptide: Copper resistance protein C (126 aa).

The signal sequence occupies residues methionine 1–alanine 23. Histidine 24 is a binding site for Cu(2+). Methionine 63, methionine 66, methionine 69, histidine 72, and methionine 75 together coordinate Cu(+). Histidine 115 lines the Cu(2+) pocket.

Belongs to the CopC family. As to quaternary structure, monomer-dimer equilibrium in solution for the apo protein. Dimerization is significantly enhanced upon binding of copper(I).

The protein localises to the periplasm. In terms of biological role, copper-binding protein involved in copper resistance. In Escherichia coli, this protein is Copper resistance protein C.